Consider the following 756-residue polypeptide: ATP-dependent 6-phosphofructokinase 2 (756 aa).

The tract at residues 1–393 (MEQKFKKGKD…KQTYLNFVSI (393 aa)) is N-terminal catalytic PFK domain 1. Residues G20, 81–82 (RC), and 111–114 (GDGS) each bind ATP. Residue D112 participates in Mg(2+) binding. Residues 157–159 (SID), R194, 201–203 (MGR), E257, R285, and 291–294 (HLQR) contribute to the substrate site. D159 functions as the Proton acceptor in the catalytic mechanism. An interdomain linker region spans residues 394–404 (PLSTTMPSRTK). A C-terminal regulatory PFK domain 2 region spans residues 405 to 756 (TFAVVHIGSP…KKPQEAVLSS (352 aa)). Residues R474, 530-534 (TISNN), 575-577 (MGS), E632, R658, and 664-667 (YSQL) contribute to the beta-D-fructose 2,6-bisphosphate site.

Belongs to the phosphofructokinase type A (PFKA) family. ATP-dependent PFK group I subfamily. Eukaryotic two domain clade 'E' sub-subfamily. As to quaternary structure, homotetramer. The cofactor is Mg(2+).

The protein localises to the cytoplasm. It catalyses the reaction beta-D-fructose 6-phosphate + ATP = beta-D-fructose 1,6-bisphosphate + ADP + H(+). It participates in carbohydrate degradation; glycolysis; D-glyceraldehyde 3-phosphate and glycerone phosphate from D-glucose: step 3/4. Its activity is regulated as follows. Allosterically activated by ADP, AMP, or fructose 2,6-bisphosphate, and allosterically inhibited by ATP or citrate. Catalyzes the phosphorylation of D-fructose 6-phosphate to fructose 1,6-bisphosphate by ATP, the first committing step of glycolysis. The protein is ATP-dependent 6-phosphofructokinase 2 of Caenorhabditis elegans.